The sequence spans 233 residues: UPF0758 protein TTE0897 (233 aa).

The region spanning 108–230 (SVTSPEDVIN…GISLKEKGYY (123 aa)) is the MPN domain. 3 residues coordinate Zn(2+): His-179, His-181, and Asp-192. A JAMM motif motif is present at residues 179 to 192 (HNHPSGDPTPSRED).

Belongs to the UPF0758 family.

The protein is UPF0758 protein TTE0897 of Caldanaerobacter subterraneus subsp. tengcongensis (strain DSM 15242 / JCM 11007 / NBRC 100824 / MB4) (Thermoanaerobacter tengcongensis).